A 73-amino-acid chain; its full sequence is Large ribosomal subunit protein uL29 (73 aa).

It belongs to the universal ribosomal protein uL29 family.

The protein is Large ribosomal subunit protein uL29 (rpl29) of Saccharolobus solfataricus (strain ATCC 35092 / DSM 1617 / JCM 11322 / P2) (Sulfolobus solfataricus).